The following is a 463-amino-acid chain: GTPase Der (463 aa).

2 consecutive EngA-type G domains span residues proline 27–glycine 190 and arginine 200–aspartate 373. GTP contacts are provided by residues glycine 33–serine 40, aspartate 80–tryptophan 84, asparagine 142–aspartate 145, glycine 206–serine 213, aspartate 253–leucine 257, and asparagine 318–aspartate 321. A KH-like domain is found at threonine 374–glutamate 456.

This sequence belongs to the TRAFAC class TrmE-Era-EngA-EngB-Septin-like GTPase superfamily. EngA (Der) GTPase family. Associates with the 50S ribosomal subunit.

Its function is as follows. GTPase that plays an essential role in the late steps of ribosome biogenesis. The chain is GTPase Der from Mycobacterium bovis (strain ATCC BAA-935 / AF2122/97).